Reading from the N-terminus, the 351-residue chain is Divinyl chlorophyll a/b light-harvesting protein PcbC (351 aa).

A run of 6 helical transmembrane segments spans residues 27-47 (FIAAHAAHAGLMMFWAGAFTL), 64-84 (LICLPHLAGLGIGGVSNGVIT), 89-109 (CTVIAVLHLIFSGVLGAGGLL), 203-223 (VMGGHAFLAFFLIIGGAFHIA), 244-264 (VLSYSLAGVAYCAFVAAFWCA), and 306-326 (LSNVHFYLGFFFLQGHLWHAL).

The protein belongs to the PsbB/PsbC family. IsiA/Pcb subfamily. In terms of assembly, the antenna complex consists of divinyl chlorophylls (a and b) and divinyl chlorophyll a/b binding proteins and binds more divinyl chlorophyll b than does the antenna complex from high-light-adapted Prochlorococcus. Divinyl chlorophyll a serves as cofactor. Divinyl chlorophyll b is required as a cofactor.

It is found in the cellular thylakoid membrane. Its function is as follows. The antenna complex functions as a light receptor, it captures and delivers excitation energy to photosystems II and I. The Prochlorales pcb genes are not related to higher plant LHCs. This is Divinyl chlorophyll a/b light-harvesting protein PcbC (pcbC) from Prochlorococcus marinus (strain SARG / CCMP1375 / SS120).